A 161-amino-acid chain; its full sequence is MFNDIGALELVTLVVLAVLVFGPDKLPKVIQDVTRTIRKIREFSDSAKQDIRQELGPEFKDFEFEDLNPKTFIRKQLDNEELGLKEIRNGFDLKKEMAEVTDAVHGRDAESSSSGSSSGSSSAASGNGRVDMSKKPEKPEKPGKTDKPAADDRPPFDMDAT.

The chain crosses the membrane as a helical span at residues Phe2–Gly22. Residues Asp102–Thr161 form a disordered region. Residues Ser111–Gly126 are compositionally biased toward low complexity. A compositionally biased stretch (basic and acidic residues) spans Asp131–Thr161.

The protein belongs to the TatB family. In terms of assembly, the Tat system comprises two distinct complexes: a TatABC complex, containing multiple copies of TatA, TatB and TatC subunits, and a separate TatA complex, containing only TatA subunits. Substrates initially bind to the TatABC complex, which probably triggers association of the separate TatA complex to form the active translocon.

Its subcellular location is the cell membrane. Its function is as follows. Part of the twin-arginine translocation (Tat) system that transports large folded proteins containing a characteristic twin-arginine motif in their signal peptide across membranes. Together with TatC, TatB is part of a receptor directly interacting with Tat signal peptides. TatB may form an oligomeric binding site that transiently accommodates folded Tat precursor proteins before their translocation. The protein is Sec-independent protein translocase protein TatB of Streptomyces coelicolor (strain ATCC BAA-471 / A3(2) / M145).